The sequence spans 275 residues: Dermonecrotic toxin LhSicTox-alphaVI1ii (275 aa).

His5 is an active-site residue. Residues Glu25 and Asp27 each contribute to the Mg(2+) site. Catalysis depends on His41, which acts as the Nucleophile. Disulfide bonds link Cys45/Cys51 and Cys47/Cys192. Residue Asp85 participates in Mg(2+) binding.

The protein belongs to the arthropod phospholipase D family. Class II subfamily. Mg(2+) is required as a cofactor. In terms of tissue distribution, expressed by the venom gland.

It localises to the secreted. The enzyme catalyses an N-(acyl)-sphingosylphosphocholine = an N-(acyl)-sphingosyl-1,3-cyclic phosphate + choline. The catalysed reaction is an N-(acyl)-sphingosylphosphoethanolamine = an N-(acyl)-sphingosyl-1,3-cyclic phosphate + ethanolamine. It catalyses the reaction a 1-acyl-sn-glycero-3-phosphocholine = a 1-acyl-sn-glycero-2,3-cyclic phosphate + choline. It carries out the reaction a 1-acyl-sn-glycero-3-phosphoethanolamine = a 1-acyl-sn-glycero-2,3-cyclic phosphate + ethanolamine. Dermonecrotic toxins cleave the phosphodiester linkage between the phosphate and headgroup of certain phospholipids (sphingolipid and lysolipid substrates), forming an alcohol (often choline) and a cyclic phosphate. This toxin acts on sphingomyelin (SM). It may also act on ceramide phosphoethanolamine (CPE), lysophosphatidylcholine (LPC) and lysophosphatidylethanolamine (LPE), but not on lysophosphatidylserine (LPS), and lysophosphatidylglycerol (LPG). It acts by transphosphatidylation, releasing exclusively cyclic phosphate products as second products. Induces dermonecrosis, hemolysis, increased vascular permeability, edema, inflammatory response, and platelet aggregation. This is Dermonecrotic toxin LhSicTox-alphaVI1ii from Loxosceles hirsuta (Recluse spider).